A 311-amino-acid chain; its full sequence is Aspartate carbamoyltransferase catalytic subunit (311 aa).

Carbamoyl phosphate is bound by residues Arg-55 and Thr-56. Residue Lys-85 participates in L-aspartate binding. Residues Arg-106, His-135, and Gln-138 each contribute to the carbamoyl phosphate site. L-aspartate contacts are provided by Arg-168 and Arg-230. Leu-268 and Pro-269 together coordinate carbamoyl phosphate.

Belongs to the aspartate/ornithine carbamoyltransferase superfamily. ATCase family. As to quaternary structure, heterododecamer (2C3:3R2) of six catalytic PyrB chains organized as two trimers (C3), and six regulatory PyrI chains organized as three dimers (R2).

It carries out the reaction carbamoyl phosphate + L-aspartate = N-carbamoyl-L-aspartate + phosphate + H(+). It functions in the pathway pyrimidine metabolism; UMP biosynthesis via de novo pathway; (S)-dihydroorotate from bicarbonate: step 2/3. Catalyzes the condensation of carbamoyl phosphate and aspartate to form carbamoyl aspartate and inorganic phosphate, the committed step in the de novo pyrimidine nucleotide biosynthesis pathway. The polypeptide is Aspartate carbamoyltransferase catalytic subunit (Yersinia pseudotuberculosis serotype O:1b (strain IP 31758)).